The chain runs to 625 residues: Pyriculol/pyriculariol biosynthesis cluster transcription factor 1 (625 aa).

2 disordered regions span residues M1–D83 and P466–S496. Low complexity predominate over residues T46–S59. Positions K73–A132 form a DNA-binding region, homeobox. A compositionally biased stretch (polar residues) spans M467–S496.

It localises to the nucleus. In terms of biological role, transcriptional regulator; part of the gene cluster that mediates the biosynthesis of pyriculol and pyriculariol, two heptaketides that induce lesion formation upon application on rice leaves but are dispensable for pathogenicity. With TRF1, negatively regulates the expression of the gene cluster and the subsequent pyriculol and pyriculariol production. In Pyricularia oryzae (strain 70-15 / ATCC MYA-4617 / FGSC 8958) (Rice blast fungus), this protein is Pyriculol/pyriculariol biosynthesis cluster transcription factor 1.